Consider the following 414-residue polypeptide: Glutamyl-tRNA reductase (414 aa).

Residues threonine 49–arginine 52, serine 108, glutamate 113–glutamine 115, and glutamine 119 each bind substrate. Cysteine 50 acts as the Nucleophile in catalysis. Glycine 188–glycine 193 lines the NADP(+) pocket.

It belongs to the glutamyl-tRNA reductase family. In terms of assembly, homodimer.

It catalyses the reaction (S)-4-amino-5-oxopentanoate + tRNA(Glu) + NADP(+) = L-glutamyl-tRNA(Glu) + NADPH + H(+). It functions in the pathway porphyrin-containing compound metabolism; protoporphyrin-IX biosynthesis; 5-aminolevulinate from L-glutamyl-tRNA(Glu): step 1/2. Functionally, catalyzes the NADPH-dependent reduction of glutamyl-tRNA(Glu) to glutamate 1-semialdehyde (GSA). The protein is Glutamyl-tRNA reductase of Francisella tularensis subsp. holarctica (strain FTNF002-00 / FTA).